A 319-amino-acid chain; its full sequence is Ferrochelatase (319 aa).

Residues His-194 and Glu-275 each contribute to the Fe cation site.

Belongs to the ferrochelatase family.

It localises to the cytoplasm. The enzyme catalyses heme b + 2 H(+) = protoporphyrin IX + Fe(2+). Its pathway is porphyrin-containing compound metabolism; protoheme biosynthesis; protoheme from protoporphyrin-IX: step 1/1. In terms of biological role, catalyzes the ferrous insertion into protoporphyrin IX. This chain is Ferrochelatase, found in Hamiltonella defensa subsp. Acyrthosiphon pisum (strain 5AT).